Consider the following 288-residue polypeptide: Pantothenate synthetase (288 aa).

Residue 30-37 (MGALHEGH) participates in ATP binding. Catalysis depends on His37, which acts as the Proton donor. Gln61 serves as a coordination point for (R)-pantoate. Residue Gln61 coordinates beta-alanine. Residue 147 to 150 (GEKD) coordinates ATP. Gln153 is a (R)-pantoate binding site. ATP is bound by residues Leu176 and 184 to 187 (ISSR).

Belongs to the pantothenate synthetase family. Homodimer.

It localises to the cytoplasm. It carries out the reaction (R)-pantoate + beta-alanine + ATP = (R)-pantothenate + AMP + diphosphate + H(+). It functions in the pathway cofactor biosynthesis; (R)-pantothenate biosynthesis; (R)-pantothenate from (R)-pantoate and beta-alanine: step 1/1. Functionally, catalyzes the condensation of pantoate with beta-alanine in an ATP-dependent reaction via a pantoyl-adenylate intermediate. This is Pantothenate synthetase from Prosthecochloris aestuarii (strain DSM 271 / SK 413).